We begin with the raw amino-acid sequence, 902 residues long: Cytosolic 10-formyltetrahydrofolate dehydrogenase (902 aa).

The tract at residues 1-310 (MKIAVIGQSL…LASNFFKGAA (310 aa)) is hydrolase domain. At S9 the chain carries Phosphoserine. K38 is subject to N6-succinyllysine. 88 to 90 (QFI) lines the (6R)-10-formyltetrahydrofolate pocket. The Proton donor role is filled by H106. D142 contributes to the (6R)-10-formyltetrahydrofolate binding site. The Carrier domain maps to 318–395 (EAELVTAEAV…DFIQLLVRKL (78 aa)). S354 is modified (O-(pantetheine 4'-phosphoryl)serine). Positions 417–902 (TVRMPHQLFI…LRVKTVTFEY (486 aa)) are aldehyde dehydrogenase domain. NADP(+) contacts are provided by residues 571 to 573 (IPW) and 597 to 600 (KPAQ). Phosphoserine is present on residues S629 and S631. Residues 630–635 (GSLVGQ) and 650–651 (GS) each bind NADP(+). Residue K660 is modified to N6-succinyllysine. E673 acts as the Proton acceptor in catalysis. Residue 673-674 (EL) participates in NADP(+) binding. C707 functions as the Proton donor in the catalytic mechanism. An NADP(+)-binding site is contributed by K757. Position 767 is an N6-succinyllysine (K767). Position 804 to 806 (804 to 806 (ESF)) interacts with NADP(+). S825 is subject to Phosphoserine. K882 is subject to N6-acetyllysine.

It in the N-terminal section; belongs to the GART family. The protein in the C-terminal section; belongs to the aldehyde dehydrogenase family. ALDH1L subfamily. As to quaternary structure, homotetramer. Phosphopantetheinylation at Ser-354 by AASDHPPT is required for the formyltetrahydrofolate dehydrogenase activity. Highly expressed in liver, pancreas and kidney.

It localises to the cytoplasm. The protein resides in the cytosol. The enzyme catalyses (6R)-10-formyltetrahydrofolate + NADP(+) + H2O = (6S)-5,6,7,8-tetrahydrofolate + CO2 + NADPH + H(+). Cytosolic 10-formyltetrahydrofolate dehydrogenase that catalyzes the NADP(+)-dependent conversion of 10-formyltetrahydrofolate to tetrahydrofolate and carbon dioxide. May also have an NADP(+)-dependent aldehyde dehydrogenase activity towards formaldehyde, acetaldehyde, propionaldehyde, and benzaldehyde. The polypeptide is Cytosolic 10-formyltetrahydrofolate dehydrogenase (Homo sapiens (Human)).